We begin with the raw amino-acid sequence, 181 residues long: Probable nicotinate-nucleotide adenylyltransferase (181 aa).

It belongs to the NadD family.

The catalysed reaction is nicotinate beta-D-ribonucleotide + ATP + H(+) = deamido-NAD(+) + diphosphate. Its pathway is cofactor biosynthesis; NAD(+) biosynthesis; deamido-NAD(+) from nicotinate D-ribonucleotide: step 1/1. Its function is as follows. Catalyzes the reversible adenylation of nicotinate mononucleotide (NaMN) to nicotinic acid adenine dinucleotide (NaAD). This Campylobacter jejuni subsp. jejuni serotype O:23/36 (strain 81-176) protein is Probable nicotinate-nucleotide adenylyltransferase.